The chain runs to 542 residues: CTP synthase (542 aa).

The interval 1 to 264 (MKFIFITGGV…AKLIINKLKL (264 aa)) is amidoligase domain. S12 is a CTP binding site. UTP is bound at residue S12. Residue 13-18 (SLGKGI) coordinates ATP. Y53 lines the L-glutamine pocket. Residue D70 coordinates ATP. The Mg(2+) site is built by D70 and E138. CTP is bound by residues 145–147 (DIE), 185–190 (KTKPTQ), and K221. UTP is bound by residues 185 to 190 (KTKPTQ) and K221. 237-239 (KDA) contributes to the ATP binding site. One can recognise a Glutamine amidotransferase type-1 domain in the interval 298–541 (YIMLKDAYTS…VKSALDKKLK (244 aa)). L-glutamine is bound at residue G359. The active-site Nucleophile; for glutamine hydrolysis is C386. L-glutamine contacts are provided by residues 387–390 (LGMQ), E410, and R467. Active-site residues include H514 and E516.

Belongs to the CTP synthase family. Homotetramer.

The enzyme catalyses UTP + L-glutamine + ATP + H2O = CTP + L-glutamate + ADP + phosphate + 2 H(+). It catalyses the reaction L-glutamine + H2O = L-glutamate + NH4(+). It carries out the reaction UTP + NH4(+) + ATP = CTP + ADP + phosphate + 2 H(+). The protein operates within pyrimidine metabolism; CTP biosynthesis via de novo pathway; CTP from UDP: step 2/2. Allosterically activated by GTP, when glutamine is the substrate; GTP has no effect on the reaction when ammonia is the substrate. The allosteric effector GTP functions by stabilizing the protein conformation that binds the tetrahedral intermediate(s) formed during glutamine hydrolysis. Inhibited by the product CTP, via allosteric rather than competitive inhibition. Catalyzes the ATP-dependent amination of UTP to CTP with either L-glutamine or ammonia as the source of nitrogen. Regulates intracellular CTP levels through interactions with the four ribonucleotide triphosphates. In Methanococcus aeolicus (strain ATCC BAA-1280 / DSM 17508 / OCM 812 / Nankai-3), this protein is CTP synthase.